We begin with the raw amino-acid sequence, 378 residues long: Chaperone protein DnaJ (378 aa).

Residues aspartate 5–glycine 70 form the J domain. The CR-type zinc-finger motif lies at glycine 133–serine 211. Residues cysteine 146, cysteine 149, cysteine 163, cysteine 166, cysteine 185, cysteine 188, cysteine 199, and cysteine 202 each contribute to the Zn(2+) site. CXXCXGXG motif repeat units lie at residues cysteine 146–glycine 153, cysteine 163–glycine 170, cysteine 185–glycine 192, and cysteine 199–glycine 206.

This sequence belongs to the DnaJ family. In terms of assembly, homodimer. Zn(2+) serves as cofactor.

It is found in the cytoplasm. Its function is as follows. Participates actively in the response to hyperosmotic and heat shock by preventing the aggregation of stress-denatured proteins and by disaggregating proteins, also in an autonomous, DnaK-independent fashion. Unfolded proteins bind initially to DnaJ; upon interaction with the DnaJ-bound protein, DnaK hydrolyzes its bound ATP, resulting in the formation of a stable complex. GrpE releases ADP from DnaK; ATP binding to DnaK triggers the release of the substrate protein, thus completing the reaction cycle. Several rounds of ATP-dependent interactions between DnaJ, DnaK and GrpE are required for fully efficient folding. Also involved, together with DnaK and GrpE, in the DNA replication of plasmids through activation of initiation proteins. In Pectobacterium carotovorum subsp. carotovorum (strain PC1), this protein is Chaperone protein DnaJ.